The chain runs to 303 residues: Polyisoprenyl-teichoic acid--peptidoglycan teichoic acid transferase TagU (303 aa).

Over methionine 1–lysine 4 the chain is Cytoplasmic. Residues isoleucine 5 to tyrosine 25 form a helical; Signal-anchor for type II membrane protein membrane-spanning segment. At asparagine 26–lysine 303 the chain is on the extracellular side.

It belongs to the LytR/CpsA/Psr (LCP) family.

It is found in the cell membrane. Its pathway is cell wall biogenesis. In terms of biological role, may catalyze the final step in cell wall teichoic acid biosynthesis, the transfer of the anionic cell wall polymers (APs) from their lipid-linked precursor to the cell wall peptidoglycan (PG). The chain is Polyisoprenyl-teichoic acid--peptidoglycan teichoic acid transferase TagU from Bacillus anthracis (strain A0248).